The primary structure comprises 202 residues: Histone H1 (202 aa).

Disordered regions lie at residues 1–50 (MTAI…VTHP) and 114–202 (YKLS…KIAV). Basic and acidic residues predominate over residues 18–38 (EASKVKEQAPATDKKPRAPKE). Residues 48 to 118 (THPPYFQMIK…KIKASYKLSE (71 aa)) form the H15 domain. Basic residues predominate over residues 160-202 (KAKATPKPKKVGAKRTRKSTPAKAKQPKSIKSPAAKRAKKIAV).

Belongs to the histone H1/H5 family.

The protein resides in the nucleus. Its subcellular location is the chromosome. Its function is as follows. Histones H1 are necessary for the condensation of nucleosome chains into higher-order structures. The polypeptide is Histone H1 (Solanum pennellii (Tomato)).